The chain runs to 40 residues: Metallothionein-1 (40 aa).

The protein belongs to the metallothionein superfamily. Type 5 family.

In terms of biological role, this protein binds cations of several transition elements. It is thought to be involved in detoxification processes. This Drosophila melanogaster (Fruit fly) protein is Metallothionein-1 (MtnA).